The primary structure comprises 231 residues: Thiamine import ATP-binding protein ThiQ (231 aa).

Residues 2–230 (LHLDRLLIRQ…PPPALRAYLG (229 aa)) enclose the ABC transporter domain. 32 to 39 (GPSGGGKS) contacts ATP.

Belongs to the ABC transporter superfamily. Thiamine importer (TC 3.A.1.19.1) family. In terms of assembly, the complex is composed of two ATP-binding proteins (ThiQ), two transmembrane proteins (ThiP) and a solute-binding protein (ThiB).

It localises to the cell inner membrane. The enzyme catalyses thiamine(out) + ATP + H2O = thiamine(in) + ADP + phosphate + H(+). Part of the ABC transporter complex ThiBPQ involved in thiamine import. Responsible for energy coupling to the transport system. The protein is Thiamine import ATP-binding protein ThiQ of Cereibacter sphaeroides (strain ATCC 17023 / DSM 158 / JCM 6121 / CCUG 31486 / LMG 2827 / NBRC 12203 / NCIMB 8253 / ATH 2.4.1.) (Rhodobacter sphaeroides).